The following is a 1330-amino-acid chain: ESX-3 secretion system protein EccC3 (1330 aa).

The next 2 membrane-spanning stretches (helical) occupy residues 43-63 (LPYL…ATGM) and 65-85 (VISP…TALY). FtsK domains lie at 456–662 (GEPL…SVSR), 811–1000 (RDPL…RDSN), and 1090–1280 (LAPV…ADSG). ATP is bound by residues 479-486 (GMTGSGKS), 829-836 (GGPKSGKS), and 1107-1114 (GDARSGKT).

As to quaternary structure, part of the ESX-3 / type VII secretion system (T7SS), which is composed of cytosolic and membrane components. The ESX-3 membrane complex is composed of EccB3, EccC3, EccD3 and EccE3.

The protein resides in the cell inner membrane. In terms of biological role, part of the ESX-3 specialized secretion system, which is important for iron and zinc uptake or homeostasis. This is ESX-3 secretion system protein EccC3 from Mycobacterium tuberculosis (strain CDC 1551 / Oshkosh).